Consider the following 86-residue polypeptide: Large ribosomal subunit protein bL27 (86 aa).

The segment at 1-22 (MAHKKAGGSSRNGRDSESKRLG) is disordered.

The protein belongs to the bacterial ribosomal protein bL27 family.

This chain is Large ribosomal subunit protein bL27, found in Acidithiobacillus ferrooxidans (strain ATCC 23270 / DSM 14882 / CIP 104768 / NCIMB 8455) (Ferrobacillus ferrooxidans (strain ATCC 23270)).